Consider the following 425-residue polypeptide: Isocitrate dehydrogenase [NADP] (425 aa).

Thr114 is a binding site for NADP(+). Residues Ser123, Asn125, Arg129, Arg139, and Arg162 each coordinate D-threo-isocitrate. A Mg(2+)-binding site is contributed by Asp316. NADP(+)-binding positions include His348 to Tyr354, Asn361, Tyr400, and Arg404.

The protein belongs to the isocitrate and isopropylmalate dehydrogenases family. As to quaternary structure, homodimer. Mg(2+) is required as a cofactor. Mn(2+) serves as cofactor.

It catalyses the reaction D-threo-isocitrate + NADP(+) = 2-oxoglutarate + CO2 + NADPH. Its function is as follows. Catalyzes the oxidative decarboxylation of isocitrate to 2-oxoglutarate and carbon dioxide with the concomitant reduction of NADP(+). The chain is Isocitrate dehydrogenase [NADP] (icd) from Helicobacter pylori (strain ATCC 700392 / 26695) (Campylobacter pylori).